Here is a 73-residue protein sequence, read N- to C-terminus: RNA-binding protein Hfq (73 aa).

The region spanning 8–68 (DQFLNQIRKD…ISTFAPQKNV (61 aa)) is the Sm domain.

It belongs to the Hfq family. As to quaternary structure, homohexamer.

Its function is as follows. RNA chaperone that binds small regulatory RNA (sRNAs) and mRNAs to facilitate mRNA translational regulation in response to envelope stress, environmental stress and changes in metabolite concentrations. Also binds with high specificity to tRNAs. This chain is RNA-binding protein Hfq, found in Bacillus pumilus (strain SAFR-032).